The chain runs to 221 residues: GTP cyclohydrolase 1 (221 aa).

3 residues coordinate Zn(2+): C111, H114, and C182.

Belongs to the GTP cyclohydrolase I family. In terms of assembly, homomer.

The enzyme catalyses GTP + H2O = 7,8-dihydroneopterin 3'-triphosphate + formate + H(+). Its pathway is cofactor biosynthesis; 7,8-dihydroneopterin triphosphate biosynthesis; 7,8-dihydroneopterin triphosphate from GTP: step 1/1. In Erwinia tasmaniensis (strain DSM 17950 / CFBP 7177 / CIP 109463 / NCPPB 4357 / Et1/99), this protein is GTP cyclohydrolase 1.